A 103-amino-acid chain; its full sequence is Phosphoribosyl-ATP pyrophosphatase (103 aa).

It belongs to the PRA-PH family.

The protein resides in the cytoplasm. It catalyses the reaction 1-(5-phospho-beta-D-ribosyl)-ATP + H2O = 1-(5-phospho-beta-D-ribosyl)-5'-AMP + diphosphate + H(+). It participates in amino-acid biosynthesis; L-histidine biosynthesis; L-histidine from 5-phospho-alpha-D-ribose 1-diphosphate: step 2/9. The chain is Phosphoribosyl-ATP pyrophosphatase from Cereibacter sphaeroides (strain ATCC 17025 / ATH 2.4.3) (Rhodobacter sphaeroides).